We begin with the raw amino-acid sequence, 622 residues long: 1-deoxy-D-xylulose-5-phosphate synthase (622 aa).

Thiamine diphosphate is bound by residues His80 and 121 to 123 (GHS). A Mg(2+)-binding site is contributed by Asp152. Residues 153–154 (GA), Asn181, Tyr288, and Glu369 contribute to the thiamine diphosphate site. Asn181 lines the Mg(2+) pocket.

This sequence belongs to the transketolase family. DXPS subfamily. In terms of assembly, homodimer. The cofactor is Mg(2+). Requires thiamine diphosphate as cofactor.

It carries out the reaction D-glyceraldehyde 3-phosphate + pyruvate + H(+) = 1-deoxy-D-xylulose 5-phosphate + CO2. It participates in metabolic intermediate biosynthesis; 1-deoxy-D-xylulose 5-phosphate biosynthesis; 1-deoxy-D-xylulose 5-phosphate from D-glyceraldehyde 3-phosphate and pyruvate: step 1/1. Catalyzes the acyloin condensation reaction between C atoms 2 and 3 of pyruvate and glyceraldehyde 3-phosphate to yield 1-deoxy-D-xylulose-5-phosphate (DXP). The polypeptide is 1-deoxy-D-xylulose-5-phosphate synthase (Psychromonas ingrahamii (strain DSM 17664 / CCUG 51855 / 37)).